The chain runs to 176 residues: Disulfide bond formation protein B (176 aa).

Over 1–11 the chain is Cytoplasmic; it reads MLQLTTYRNLQ. A helical transmembrane segment spans residues 12 to 28; the sequence is VFLVIMTAIGMSFALFF. Residues 29–46 lie on the Periplasmic side of the membrane; the sequence is LQRYMGFSPCPLCIFQRI. Residues C38 and C41 are joined by a disulfide bond. A helical membrane pass occupies residues 47–63; it reads GLMIMGGFALIAALFHP. Residues 64–70 are Cytoplasmic-facing; sequence KSMVIRL. A helical membrane pass occupies residues 71–88; that stretch reads LLWLGSLAGIGWAAIVAG. Topologically, residues 89-145 are periplasmic; that stretch reads RHVWLQHLPADQVPSCGPGLDYWLDTLPMQQVLKEVFAGSGECASIDWTFLGLSIPE. C104 and C131 are oxidised to a cystine. Residues 146 to 164 traverse the membrane as a helical segment; sequence QSLILFSILILTHLLILWR. At 165-176 the chain is on the cytoplasmic side; it reads IVRPATPKPLAR.

The protein belongs to the DsbB family.

It is found in the cell inner membrane. In terms of biological role, required for disulfide bond formation in some periplasmic proteins. Acts by oxidizing the DsbA protein. The sequence is that of Disulfide bond formation protein B from Psychrobacter cryohalolentis (strain ATCC BAA-1226 / DSM 17306 / VKM B-2378 / K5).